The primary structure comprises 85 residues: RNA-binding protein Hfq (85 aa).

A Sm domain is found at 10–69; the sequence is DPFLNILRKEHVPVSIYLVNGIKLQGQIESFDQYVVLLKNTVTQMVYKHAISTVVPARPV.

The protein belongs to the Hfq family. In terms of assembly, homohexamer.

In terms of biological role, RNA chaperone that binds small regulatory RNA (sRNAs) and mRNAs to facilitate mRNA translational regulation in response to envelope stress, environmental stress and changes in metabolite concentrations. Also binds with high specificity to tRNAs. The polypeptide is RNA-binding protein Hfq (Laribacter hongkongensis (strain HLHK9)).